Consider the following 369-residue polypeptide: Superinfection exclusion protein (369 aa).

Positions 1–15 (MIALLILSLTCSVST) are cleaved as a signal peptide.

It belongs to the serpin family. Orthopoxvirus OPG040 subfamily. In terms of assembly, interacts with A56 protein.

Its subcellular location is the virion membrane. The protein resides in the host cell membrane. Prevents cell to cell fusion via its interaction with A56 protein. The A56-K2 complex associates with components of the entry fusion complex (EFC) presumably to avoid superinfection and syncytium formation. The polypeptide is Superinfection exclusion protein (OPG040) (Vaccinia virus (strain Copenhagen) (VACV)).